Consider the following 98-residue polypeptide: Beta-elicitin MGM-beta (98 aa).

Cystine bridges form between Cys-3–Cys-71, Cys-27–Cys-56, and Cys-51–Cys-95.

This sequence belongs to the elicitin family.

The protein localises to the secreted. Induces local and distal defense responses (incompatible hypersensitive reaction) in plants from the solanaceae and cruciferae families. Elicits leaf necrosis and causes the accumulation of pathogenesis-related proteins. Might interact with the lipidic molecules of the plasma membrane. In Phytophthora megasperma (Potato pink rot fungus), this protein is Beta-elicitin MGM-beta.